A 540-amino-acid chain; its full sequence is Aquaporin-5 (540 aa).

The segment at 1–224 (MSGEGTDLPT…ESIDGYNYES (224 aa)) is disordered. Over 1–263 (MSGEGTDLPT…QWMNSNFKNH (263 aa)) the chain is Cytoplasmic. Residues 25–44 (PGSSQQQLVPIAHTISSPSK) show a composition bias toward polar residues. 4 stretches are compositionally biased toward basic and acidic residues: residues 119 to 133 (RARE…EREN), 140 to 155 (RARD…ERSR), 174 to 194 (YFDD…KGMR), and 204 to 214 (SGEKVRRKSTD). A helical transmembrane segment spans residues 264-284 (FVATIGEFVGTTMFLFFAFAG). The Extracellular segment spans residues 285–308 (TQVANIDSNTVNTTTGAATGFNIA). An N-linked (GlcNAc...) asparagine glycan is attached at Asn-296. Residues 309–329 (VQLYIAVIFGFSLMVNVWIFF) form a helical membrane-spanning segment. Residues 330 to 332 (RIS) are Cytoplasmic-facing. Residues 333–353 (GGLFNPAVTLGMVLVGAIPIP) traverse the membrane as a helical segment. The Extracellular segment spans residues 354–356 (RAA). Residues 357–377 (CLFFAQILGGIAASGMVLGLF) traverse the membrane as a helical segment. The Cytoplasmic portion of the chain corresponds to 378–393 (PTTFNVRTTLGASTST). A helical membrane pass occupies residues 394–414 (VQGVFIEAILTAELVFTIFML). Over 415–420 (AKEKHK) the chain is Extracellular. Residues 421-441 (ATFIAPVGIGLALFIAEMVGV) traverse the membrane as a helical segment. Residues 442–467 (YYTGGSLNPARSFGPCVVSGSFDKEH) lie on the Cytoplasmic side of the membrane. A helical membrane pass occupies residues 468 to 488 (WIYWIGPITGTFIAVFFYKFI). At 489-540 (KMLEYEMANPGQDGDAKNDPTQNEKKREQILEERNRRYEKRNGSLRPGSRLS) the chain is on the extracellular side. Positions 499-540 (GQDGDAKNDPTQNEKKREQILEERNRRYEKRNGSLRPGSRLS) are disordered. The span at 502–530 (GDAKNDPTQNEKKREQILEERNRRYEKRN) shows a compositional bias: basic and acidic residues. N-linked (GlcNAc...) asparagine glycosylation occurs at Asn-530.

Belongs to the MIP/aquaporin (TC 1.A.8) family.

It is found in the membrane. It catalyses the reaction H2O(in) = H2O(out). In terms of biological role, water channel required to facilitate the transport of water across membranes. May play a role in the vegetative growth. The protein is Aquaporin-5 of Botryotinia fuckeliana (strain B05.10) (Noble rot fungus).